A 165-amino-acid polypeptide reads, in one-letter code: NADPH-dependent 7-cyano-7-deazaguanine reductase (165 aa).

Residue Cys56 is the Thioimide intermediate of the active site. Residue Asp63 is the Proton donor of the active site. Substrate is bound by residues 78-80 (VES) and 97-98 (HE).

Belongs to the GTP cyclohydrolase I family. QueF type 1 subfamily.

Its subcellular location is the cytoplasm. It catalyses the reaction 7-aminomethyl-7-carbaguanine + 2 NADP(+) = 7-cyano-7-deazaguanine + 2 NADPH + 3 H(+). It functions in the pathway tRNA modification; tRNA-queuosine biosynthesis. Catalyzes the NADPH-dependent reduction of 7-cyano-7-deazaguanine (preQ0) to 7-aminomethyl-7-deazaguanine (preQ1). The chain is NADPH-dependent 7-cyano-7-deazaguanine reductase from Bacillus thuringiensis subsp. konkukian (strain 97-27).